The primary structure comprises 738 residues: Catalase-peroxidase (738 aa).

Residues 1-24 (MSEEHPPIAEANSQPSNGCPVAGG) are disordered. Positions 108-231 (WHAAGTYRVG…LAAVQMGLIY (124 aa)) form a cross-link, tryptophyl-tyrosyl-methioninium (Trp-Tyr) (with M-257). The active-site Proton acceptor is histidine 109. Positions 231 to 257 (YVNPEGPNGNPDPLAAAIDIRETFGRM) form a cross-link, tryptophyl-tyrosyl-methioninium (Tyr-Met) (with W-108). Heme b is bound at residue histidine 272.

This sequence belongs to the peroxidase family. Peroxidase/catalase subfamily. In terms of assembly, homodimer or homotetramer. Heme b is required as a cofactor. Post-translationally, formation of the three residue Trp-Tyr-Met cross-link is important for the catalase, but not the peroxidase activity of the enzyme.

It carries out the reaction H2O2 + AH2 = A + 2 H2O. The catalysed reaction is 2 H2O2 = O2 + 2 H2O. In terms of biological role, bifunctional enzyme with both catalase and broad-spectrum peroxidase activity. The chain is Catalase-peroxidase from Mycobacteroides abscessus (strain ATCC 19977 / DSM 44196 / CCUG 20993 / CIP 104536 / JCM 13569 / NCTC 13031 / TMC 1543 / L948) (Mycobacterium abscessus).